A 719-amino-acid chain; its full sequence is Cyclin-dependent kinase 11.1 (719 aa).

3 stretches are compositionally biased toward basic and acidic residues: residues 1 to 20, 38 to 48, and 78 to 129; these read MSDH…ESHK, KGLESKMRESI, and KAKE…DQKV. Disordered regions lie at residues 1–215 and 231–315; these read MSDH…KDDD and EEKE…EMTE. Basic residues predominate over residues 130 to 140; that stretch reads HEHRHHHHHRK. Residues 141 to 163 show a composition bias toward basic and acidic residues; it reads HETDGHRTNRSNRDRSSERDSEK. Over residues 164–174 the composition is skewed to basic residues; the sequence is HKRHIDRHKKS. Basic and acidic residues-rich tracts occupy residues 191 to 215 and 264 to 274; these read HTDV…KDDD and DDTKPKSPGKA. Residues 275–285 are compositionally biased toward acidic residues; that stretch reads EDDDDVIEVLD. The Protein kinase domain occupies 356–647; that stretch reads YECVNRVDEG…ATQALDHEWF (292 aa). Residues 362–370 and Lys385 contribute to the ATP site; that span reads VDEGTFGVV. The active-site Proton acceptor is Asp484. Residues 657–689 form a disordered region; that stretch reads EEFPTFPAKSEQNKAPPPAKQKQQENRISHVDP. Residues 678–689 are compositionally biased toward basic and acidic residues; sequence KQQENRISHVDP.

Belongs to the protein kinase superfamily. CMGC Ser/Thr protein kinase family. CDC2/CDKX subfamily. Broadly expressed in somatic and germ line cells (at protein level). Not expressed in sperm (at protein level).

The protein localises to the nucleus. It carries out the reaction L-seryl-[protein] + ATP = O-phospho-L-seryl-[protein] + ADP + H(+). The catalysed reaction is L-threonyl-[protein] + ATP = O-phospho-L-threonyl-[protein] + ADP + H(+). In terms of biological role, probable cyclin-dependent kinase whose activity is most likely regulated by the cyclin cyl-1/Cylin-L. Important for normal oocyte and sperm development; probably required during multiple stages of gametogenesis. Plays a role in the activation of RAS-ERK signaling in the germ line. Also acts partially redundantly with cdk-11.2 to ensure embryonic viability. This Caenorhabditis elegans protein is Cyclin-dependent kinase 11.1.